Consider the following 463-residue polypeptide: Protein phosphatase PP2A regulatory subunit B (463 aa).

2 WD repeats span residues 27-66 and 87-128; these read TEADIISAVEFDHTGDYLATGDKGGRVVLFERNHSKKGCE and EIEE…LKVV. Position 134 is a phosphoserine (S134). WD repeat units follow at residues 174–212, 223–263, 282–320, and 337–378; these read AHAYHINSISVNSDAETYISADDLRINLWNLSISDHSFN, ELTE…LCDN, EIISSISDVKFSQNGRYILSRDYLTLKIWDVNMEKAPVK, and ENDC…PGDR.

This sequence belongs to the phosphatase 2A regulatory subunit B family. As to quaternary structure, PP2A exists in several trimeric forms, all of which consist of a core composed of a catalytic subunit associated with a 65 kDa (PR65) (Subunit A) and a 55 kDa (PR55) (Subunit B) regulatory subunit.

Phosphatase 2A affects a variety of biological processes in the cell such as transcription, cell cycle progression and cellular morphogenesis, and provides an initial identification of critical substrates for this phosphatase. The regulatory subunit may direct the catalytic subunit to distinct, albeit overlapping, subsets of substrates. The protein is Protein phosphatase PP2A regulatory subunit B (pab1) of Schizosaccharomyces pombe (strain 972 / ATCC 24843) (Fission yeast).